The following is a 4473-amino-acid chain: Plectin (4473 aa).

Calponin-homology (CH) domains lie at Asp-1 to Gln-74 and Met-87 to Pro-192. Positions Asp-1–Pro-192 are actin-binding. A globular 1 region spans residues Asp-1–Tyr-1259. Residues Arg-449 to Leu-508 form a Spectrin 1 repeat. Ser-509 is modified (phosphoserine). Spectrin repeat units lie at residues Lys-529 to His-613 and Leu-626 to Gln-719. Position 604 is a phosphothreonine (Thr-604). Residues Arg-730 to Pro-787 form the SH3 domain. Ser-836 carries the post-translational modification Phosphoserine. One copy of the Spectrin 4 repeat lies at Arg-1104–Ala-1204. Ser-1224 bears the Phosphoserine mark. A coiled-coil region spans residues Gln-1258 to Ala-2548. Positions Ile-1260 to Thr-2544 are central fibrous rod domain. Disordered regions lie at residues Glu-1274 to Ala-1293 and Arg-1407 to Gln-1434. At Ser-1510 the chain carries Phosphoserine. The residue at position 1514 (Lys-1514) is an N6-acetyllysine. 5 disordered regions span residues Val-1529–Arg-1550, Ser-1582–Ala-1616, Ala-1881–Gln-1929, Leu-1950–Lys-1971, and Glu-2003–Lys-2098. 3 stretches are compositionally biased toward basic and acidic residues: residues Asp-1587–Ala-1616, Ala-1881–Arg-1897, and Glu-1905–Gln-1917. Over residues Ala-1959–Ala-1968 the composition is skewed to low complexity. Residues Glu-2003–Ala-2047 are compositionally biased toward basic and acidic residues. Positions Glu-2048–Ala-2061 are enriched in low complexity. Over residues Glu-2062–Gln-2077 the composition is skewed to basic and acidic residues. Ser-2420 is subject to Phosphoserine. At Lys-2425 the chain carries N6-acetyllysine. Positions Arg-2457–Ala-2476 are disordered. The segment at Gln-2545–Ala-4473 is globular 2. A phosphoserine mark is found at Ser-2563 and Ser-2591. Plectin repeat units lie at residues Arg-2615–Ala-2652, Leu-2653–His-2690, His-2691–Ala-2728, Ile-2729–Ser-2766, and Ala-2770–Gly-2804. A Phosphothreonine modification is found at Thr-2675. Tyr-2822 carries the post-translational modification Phosphotyrosine. Lys-2842 and Lys-2880 each carry N6-acetyllysine. Plectin repeat units follow at residues Ala-2905–Val-2942, Arg-2943–Ala-2980, Val-2981–His-3018, Glu-3019–Gly-3056, and Leu-3057–Asn-3094. Tyr-3151 carries the phosphotyrosine modification. Position 3209 is an N6-acetyllysine (Lys-3209). Plectin repeat units lie at residues Arg-3274–Ala-3311, Thr-3312–His-3349, Glu-3350–Ala-3387, Ile-3388–Ser-3425, and Ala-3429–Gly-3463. Residue Thr-3574 is modified to Phosphothreonine. Tyr-3579 bears the Phosphotyrosine mark. Plectin repeat units follow at residues Trp-3609–Ala-3646, Arg-3647–His-3684, Asp-3685–Ala-3722, Leu-3723–His-3760, Ser-3764–Gly-3797, and Leu-3800–Ala-3834. Residue Thr-3819 is modified to Phosphothreonine. At Ser-3843 the chain carries Phosphoserine. Plectin repeat units lie at residues Gln-3852–Ala-3889, Phe-3890–Lys-3927, Asp-3928–Gly-3965, Ile-3966–Asn-4003, Thr-4007–Gly-4041, and Arg-4043–Tyr-4094. Residues Gln-4039–Ile-4089 form a binding to intermediate filaments region. Residues Ser-4171, Ser-4173, Ser-4174, Ser-4175, Ser-4178, Ser-4179, Ser-4180, and Ser-4181 each carry the phosphoserine modification. Tyr-4182 is subject to Phosphotyrosine. Phosphoserine occurs at positions 4185, 4189, and 4195. Plectin repeat units lie at residues Ser-4197–Gly-4234, Gln-4235–Val-4272, Asp-4273–Gly-4310, Gln-4311–Ala-4348, and Gln-4349–Gly-4386. The residue at position 4200 (Thr-4200) is a Phosphothreonine. Thr-4328 carries the phosphothreonine; by CDK1 modification. Residues Ser-4396 and Ser-4402 each carry the phosphoserine modification. Positions Tyr-4400–Gly-4460 are enriched in low complexity. The tract at residues Tyr-4400–Ala-4473 is disordered. Tyr-4404 carries the phosphotyrosine modification. 3 positions are modified to phosphoserine: Ser-4405, Ser-4407, and Ser-4411. Phosphothreonine is present on Thr-4412. The 4 X 4 AA tandem repeats of G-S-R-X stretch occupies residues Gly-4414–Arg-4429. A Phosphoserine modification is found at Ser-4415. Residues Arg-4416 and Arg-4429 each carry the omega-N-methylarginine modification. Residues Ser-4431 and Ser-4464 each carry the phosphoserine modification.

The protein belongs to the plakin or cytolinker family. Homodimer or homotetramer. Interacts (via actin-binding domain) with SYNE3. Interacts (via calponin-homology (CH) 1 domain) with VIM (via rod region). Interacts (via N-terminus) with DST isoform 2 (via N-terminus). Interacts with FER. Interacts with TOR1A. Interacts with ANK3. Identified in complexes that contain VIM, EZR, AHNAK, BFSP1, BFSP2, ANK2, PLEC, PRX and spectrin. In terms of processing, phosphorylated by CDK1; regulates dissociation from intermediate filaments during mitosis.

The protein resides in the cytoplasm. It is found in the cytoskeleton. It localises to the cell junction. The protein localises to the hemidesmosome. Its subcellular location is the cell projection. The protein resides in the podosome. Interlinks intermediate filaments with microtubules and microfilaments and anchors intermediate filaments to desmosomes or hemidesmosomes. May be involved not only in the cross-linking and stabilization of cytoskeletal intermediate filaments network, but also in the regulation of their dynamics. This chain is Plectin (PLEC), found in Cricetulus griseus (Chinese hamster).